The following is a 452-amino-acid chain: Probable cysteine protease RD21C (452 aa).

The signal sequence occupies residues 1–29; sequence MATSIKSITLALLIFSVLLISLSLGSVTA. Positions 30 to 128 are cleaved as a propeptide — activation peptide; sequence TETTRNEAEA…EKYLYKVGDS (99 aa). N82 carries N-linked (GlcNAc...) asparagine glycosylation. Intrachain disulfides connect C150-C192, C184-C226, C284-C335, C363-C375, and C369-C390. Residue C153 is part of the active site. Catalysis depends on residues H290 and N310. Positions 346 to 452 are cleaved as a propeptide — removed in mature form; it reads KSSGSNPPKP…KSTNMLVGSA (107 aa).

The protein belongs to the peptidase C1 family. As to quaternary structure, interacts with WSCP.

Its function is as follows. Probable thiol protease. The chain is Probable cysteine protease RD21C from Arabidopsis thaliana (Mouse-ear cress).